The following is a 105-amino-acid chain: Small cysteine and glycine repeat-containing protein 4 (105 aa).

The interval 4-87 (CGCGSCGGCG…RRTCGSCGCG (84 aa)) is 14 X 2 AA repeats of CG.

The protein belongs to the KRTAP type 28 family.

In terms of biological role, in the hair cortex, hair keratin intermediate filaments are embedded in an interfilamentous matrix, consisting of hair keratin-associated proteins (KRTAP), which are essential for the formation of a rigid and resistant hair shaft through their extensive disulfide bond cross-linking with abundant cysteine residues of hair keratins. The matrix proteins include the high-sulfur and high-glycine-tyrosine keratins. This Homo sapiens (Human) protein is Small cysteine and glycine repeat-containing protein 4.